We begin with the raw amino-acid sequence, 169 residues long: Large ribosomal subunit protein uL10 (169 aa).

This sequence belongs to the universal ribosomal protein uL10 family. Part of the ribosomal stalk of the 50S ribosomal subunit. The N-terminus interacts with L11 and the large rRNA to form the base of the stalk. The C-terminus forms an elongated spine to which L12 dimers bind in a sequential fashion forming a multimeric L10(L12)X complex.

Its function is as follows. Forms part of the ribosomal stalk, playing a central role in the interaction of the ribosome with GTP-bound translation factors. This chain is Large ribosomal subunit protein uL10, found in Orientia tsutsugamushi (strain Ikeda) (Rickettsia tsutsugamushi).